Here is a 708-residue protein sequence, read N- to C-terminus: Lactotransferrin (708 aa).

Positions 1-19 (MKLFVPALLSLGALGLCLA) are cleaved as a signal peptide. Transferrin-like domains are found at residues 25–352 (VRWC…NLRE) and 364–693 (VVWC…NLKK). Cystine bridges form between cysteine 28–cysteine 64 and cysteine 38–cysteine 55. Aspartate 79 serves as a coordination point for Fe(3+). Lysine 92 is an active-site residue. Residue tyrosine 111 participates in Fe(3+) binding. Disulfide bonds link cysteine 134–cysteine 217, cysteine 176–cysteine 192, cysteine 179–cysteine 202, cysteine 189–cysteine 200, and cysteine 250–cysteine 264. The hydrogencarbonate site is built by arginine 140, alanine 142, and glycine 143. A Fe(3+)-binding site is contributed by tyrosine 211. Asparagine 252 carries N-linked (GlcNAc...) (high mannose) asparagine glycosylation. Residue histidine 272 participates in Fe(3+) binding. Serine 278 acts as the Nucleophile in catalysis. Residue asparagine 300 is glycosylated (N-linked (GlcNAc...) asparagine). 2 disulfides stabilise this stretch: cysteine 367–cysteine 399 and cysteine 377–cysteine 390. A glycan (N-linked (GlcNAc...) (complex) asparagine; alternate) is linked at asparagine 387. Asparagine 387 is a glycosylation site (N-linked (GlcNAc...) (high mannose) asparagine; alternate). Residue asparagine 387 is glycosylated (N-linked (GlcNAc...) (hybrid) asparagine; alternate). Aspartate 414 and tyrosine 452 together coordinate Fe(3+). Intrachain disulfides connect cysteine 424-cysteine 703, cysteine 444-cysteine 666, cysteine 476-cysteine 551, cysteine 500-cysteine 694, cysteine 510-cysteine 524, cysteine 521-cysteine 534, cysteine 592-cysteine 606, and cysteine 644-cysteine 649. Threonine 478, arginine 482, alanine 484, and glycine 485 together coordinate hydrogencarbonate. N-linked (GlcNAc...) (complex) asparagine; alternate glycosylation is present at asparagine 495. N-linked (GlcNAc...) (high mannose) asparagine; alternate glycosylation occurs at asparagine 495. Asparagine 495 carries an N-linked (GlcNAc...) (hybrid) asparagine; alternate glycan. Tyrosine 545 contacts Fe(3+). A glycan (N-linked (GlcNAc...) (high mannose) asparagine) is linked at asparagine 564. Histidine 614 contacts Fe(3+).

It belongs to the transferrin family. As to quaternary structure, monomer. Found in a complex with LTF, CLU, EPPIN and SEMG1. Found in a complex with MPO and LTF; interacts directly with CP, allows Fe(3+) incorporation into LTF and activation of CP ferroxidase activity. In terms of processing, poly-N-acetyllactosaminic carbohydrate moiety seems to be needed for TLR4 activation.

It localises to the secreted. The protein localises to the cytoplasmic granule. Its function is as follows. Transferrins are iron binding transport proteins which can bind two Fe(3+) ions in association with the binding of an anion, usually bicarbonate. In terms of biological role, major iron-binding and multifunctional protein found in exocrine fluids such as breast milk and mucosal secretions. Has antimicrobial activity, which depends on the extracellular cation concentration. Antimicrobial properties include bacteriostasis, which is related to its ability to sequester free iron and thus inhibit microbial growth, as well as direct bactericidal properties leading to the release of lipopolysaccharides from the bacterial outer membrane. Can also prevent bacterial biofilm development in P.aeruginosa infection. Has weak antifungal activity against C.albicans. Has anabolic, differentiating and anti-apoptotic effects on osteoblasts and can also inhibit osteoclastogenesis, possibly playing a role in the regulation of bone growth. Promotes binding of species C adenoviruses to epithelial cells, promoting adenovirus infection. Can inhibit papillomavirus infections. Stimulates the TLR4 signaling pathway leading to NF-kappa-B activation and subsequent pro-inflammatory cytokine production while also interfering with the lipopolysaccharide (LPS)-stimulated TLR4 signaling. Inhibits neutrophil granulocyte migration to sites of apoptosis, when secreted by apoptotic cells. Stimulates VEGFA-mediated endothelial cell migration and proliferation. Binds heparin, chondroitin sulfate and possibly other glycosaminoglycans (GAGs). Also binds specifically to pneumococcal surface protein A (PspA), the lipid A portion of bacterial lipopolysaccharide (LPS), lysozyme and DNA. Functionally, lactoferricin binds to the bacterial surface and is crucial for the bactericidal functions. Has some antiviral activity against papillomavirus infection. N-terminal region shows strong antifungal activity against C.albicans. Contains two BBXB heparin-binding consensus sequences that appear to form the predominate functional GAG-binding site. The lactotransferrin transferrin-like domain 1 functions as a serine protease of the peptidase S60 family that cuts arginine rich regions. This function contributes to the antimicrobial activity. Shows a preferential cleavage at -Arg-Ser-Arg-Arg-|- and -Arg-Arg-Ser-Arg-|-, and of Z-Phe-Arg-|-aminomethylcoumarin sites. This is Lactotransferrin (LTF) from Capra hircus (Goat).